The chain runs to 324 residues: Heparan sulfate 2-O-sulfotransferase hst-2 (324 aa).

Over 1–6 (MLWKKR) the chain is Cytoplasmic. Residues 7–24 (KVLYFAGISVFILILLLL) form a helical; Signal-anchor for type II membrane protein membrane-spanning segment. Residues 25-324 (KLNSKPKANV…QYHFEKIKPS (300 aa)) lie on the Lumenal side of the membrane. Residues Asn75 and Asn94 are each glycosylated (N-linked (GlcNAc...) asparagine). Residues His107 and His109 contribute to the active site. Asn161 carries an N-linked (GlcNAc...) asparagine glycan. 2 disulfides stabilise this stretch: Cys167–Cys175 and Cys188–Cys194.

The protein belongs to the sulfotransferase 3 family. Homotrimer. In terms of tissue distribution, present in the hypodermis, muscle, distal tip cells (DTCs) and in neurons (at protein level).

The protein localises to the golgi apparatus membrane. Functionally, catalyzes the transfer of sulfate to the C2-position of selected hexuronic acid residues within the maturing heparan sulfate (HS). Involved in cell adhesion and guidance by specifically modifying proteoglycans in the extracellular matrix and on the cell surface that are essential for axon migrations. This chain is Heparan sulfate 2-O-sulfotransferase hst-2, found in Caenorhabditis elegans.